A 284-amino-acid polypeptide reads, in one-letter code: 4-hydroxybenzoate octaprenyltransferase (284 aa).

The next 9 membrane-spanning stretches (helical) occupy residues Ile19 to Leu39, Ile42 to Ile62, Gly85 to Ile105, Val107 to Leu127, Phe134 to Phe154, Ala165 to Leu185, Ile211 to Phe231, Ser233 to Tyr253, and Cys261 to Ile281.

The protein belongs to the UbiA prenyltransferase family. The cofactor is Mg(2+).

The protein resides in the cell inner membrane. It carries out the reaction all-trans-octaprenyl diphosphate + 4-hydroxybenzoate = 4-hydroxy-3-(all-trans-octaprenyl)benzoate + diphosphate. It participates in cofactor biosynthesis; ubiquinone biosynthesis. In terms of biological role, catalyzes the prenylation of para-hydroxybenzoate (PHB) with an all-trans polyprenyl group. Mediates the second step in the final reaction sequence of ubiquinone-8 (UQ-8) biosynthesis, which is the condensation of the polyisoprenoid side chain with PHB, generating the first membrane-bound Q intermediate 3-octaprenyl-4-hydroxybenzoate. The sequence is that of 4-hydroxybenzoate octaprenyltransferase from Francisella tularensis subsp. novicida (strain U112).